The sequence spans 186 residues: Threonylcarbamoyl-AMP synthase (186 aa).

One can recognise a YrdC-like domain in the interval 6 to 186; it reads GFRLRLAANA…FDAMSGRRIR (181 aa).

The protein belongs to the SUA5 family. TsaC subfamily.

The protein localises to the cytoplasm. The catalysed reaction is L-threonine + hydrogencarbonate + ATP = L-threonylcarbamoyladenylate + diphosphate + H2O. Required for the formation of a threonylcarbamoyl group on adenosine at position 37 (t(6)A37) in tRNAs that read codons beginning with adenine. Catalyzes the conversion of L-threonine, HCO(3)(-)/CO(2) and ATP to give threonylcarbamoyl-AMP (TC-AMP) as the acyladenylate intermediate, with the release of diphosphate. This Methylococcus capsulatus (strain ATCC 33009 / NCIMB 11132 / Bath) protein is Threonylcarbamoyl-AMP synthase.